Here is a 278-residue protein sequence, read N- to C-terminus: Pantothenate synthetase (278 aa).

27–34 is an ATP binding site; the sequence is MGNLHEGH. Residue His-34 is the Proton donor of the active site. Gln-58 provides a ligand contact to (R)-pantoate. Gln-58 contacts beta-alanine. 147 to 150 is a binding site for ATP; it reads GEKD. A (R)-pantoate-binding site is contributed by Gln-153. 184–187 is a binding site for ATP; that stretch reads YSSR.

It belongs to the pantothenate synthetase family. In terms of assembly, homodimer.

The protein resides in the cytoplasm. It carries out the reaction (R)-pantoate + beta-alanine + ATP = (R)-pantothenate + AMP + diphosphate + H(+). Its pathway is cofactor biosynthesis; (R)-pantothenate biosynthesis; (R)-pantothenate from (R)-pantoate and beta-alanine: step 1/1. Its function is as follows. Catalyzes the condensation of pantoate with beta-alanine in an ATP-dependent reaction via a pantoyl-adenylate intermediate. The sequence is that of Pantothenate synthetase from Acidithiobacillus ferrooxidans (strain ATCC 23270 / DSM 14882 / CIP 104768 / NCIMB 8455) (Ferrobacillus ferrooxidans (strain ATCC 23270)).